The following is a 414-amino-acid chain: eIF5-mimic protein 1 (414 aa).

The tract at residues Met1 to Lys22 is disordered. The W2 domain occupies Val248–Ile414.

Belongs to the BZW family.

The protein resides in the cytoplasm. Functionally, translation initiation regulator which may repress non-AUG initiated translation and repeat-associated non-AUG (RAN) initiated translation by acting as a competitive inhibitor of eukaryotic translation initiation factor 5 (EIF5) function. This chain is eIF5-mimic protein 1 (BZW2), found in Gallus gallus (Chicken).